The chain runs to 459 residues: FAD-dependent monooxygenase CTB5 (459 aa).

Residues 10 to 187 (SDLHPSCIAL…TAVTLKAFEQ (178 aa)) form the FAD-binding PCMH-type domain.

The protein belongs to the oxygen-dependent FAD-linked oxidoreductase family.

The protein operates within mycotoxin biosynthesis. FAD-dependent monooxygenase; part of the gene cluster that mediates the biosynthesis of cercosporin, a light-activated, non-host-selective toxin. The perylenequinone chromophore of cercosporin absorbs light energy to attain an electronically-activated triplet state and produces active oxygen species such as the hydroxyl radical, superoxide, hydrogen peroxide or singlet oxygen upon reaction with oxygen molecules. These reactive oxygen species cause damage to various cellular components including lipids, proteins and nucleic acids. The first step of cercosporin biosynthesis is performed by the polyketide synthase CTB1 which catalyzes the formation of nor-toralactone. The starter unit acyltransferase (SAT) domain of CTB1 initiates polyketide extension by the selective utilization of acetyl-CoA, which is elongated to the heptaketide in the beta-ketoacyl synthase (KS) domain by successive condensations with six malonyl units introduced by the malonyl acyltransferase (MAT) domain. The product template (PT) domain catalyzes C4-C9 and C2-C11 aldol cyclizations and dehydrations to a trihydroxynaphthalene, which is thought to be delivered to the thioesterase (TE) domain for product release. The bifunctional enzyme CTB3 then methylates nor-toralactone to toralactone before conducting an unusual oxidative aromatic ring opening. The O-methyltransferase CTB2 further methylates the nascent OH-6 of the CBT3 product, blocking further oxidation at this site before the reductase CTB6 reduces the 2-oxopropyl ketone at position C7, giving naphthalene. The FAD-dependent monooxygenase CTB5 in concert with the multicopper oxidase CTB12 are responsible for homodimerization of naphthalene with CTB7 installing the dioxepine moiety, finally producing cercosporin. The fasciclin domain-containing protein CTB11 might act with CTB5 and CTB12 whereas the roles of CTB9 and CTB10 have still to be elucidated. This chain is FAD-dependent monooxygenase CTB5, found in Cercospora nicotianae (Barn spot disease fungus).